Here is a 200-residue protein sequence, read N- to C-terminus: Cleavage and polyadenylation specificity factor subunit 5 (200 aa).

The Nudix hydrolase domain occupies 45–170; sequence LRKAVEGIII…LSLIAVSLYE (126 aa). The tract at residues 70 to 72 is interaction with RNA; sequence NYF. The short motif at 77 to 98 is the Nudix box element; it reads GKLKPGENEIDGLIRKLTKKLS.

Belongs to the Nudix hydrolase family. CPSF5 subfamily. Homodimer (via N- and C-terminus); binds RNA as homodimer. Component of the cleavage factor Im (CFIm) complex.

It localises to the nucleus. The protein localises to the cytoplasm. Functionally, component of the cleavage factor Im (CFIm) complex that functions as an activator of the pre-mRNA 3'-end cleavage and polyadenylation processing required for the maturation of pre-mRNA into functional mRNAs. CFIm contributes to the recruitment of multiprotein complexes on specific sequences on the pre-mRNA 3'-end, so called cleavage and polyadenylation signals (pA signals). Most pre-mRNAs contain multiple pA signals, resulting in alternative cleavage and polyadenylation (APA) producing mRNAs with variable 3'-end formation. The CFIm complex acts as a key regulator of cleavage and polyadenylation site choice during APA through its binding to 5'-UGUA-3' elements localized in the 3'-untranslated region (UTR) for a huge number of pre-mRNAs. Binds to 5'-UGUA-3' elements localized upstream of pA signals that act as enhancers of pre-mRNA 3'-end processing. The homodimer mediates simultaneous sequence-specific recognition of two 5'-UGUA-3' elements within the pre-mRNA. Plays a role in somatic cell fate transitions and pluripotency by regulating widespread changes in gene expression through an APA-dependent function. Binds to chromatin. The polypeptide is Cleavage and polyadenylation specificity factor subunit 5 (Dictyostelium discoideum (Social amoeba)).